The primary structure comprises 377 residues: Chaperone protein DnaJ (377 aa).

A J domain is found at 5–70 (DYYEVLGVGK…EKKAAYDQYG (66 aa)). Residues 137-215 (GHEAQIRVPH…CHGQGKLKSQ (79 aa)) form a CR-type zinc finger. Zn(2+)-binding residues include C150, C153, C167, C170, C189, C192, C203, and C206. CXXCXGXG motif repeat units follow at residues 150-157 (CDHCHGNG), 167-174 (CPTCHGAG), 189-196 (CPKCHGSG), and 203-210 (CTKCHGQG).

This sequence belongs to the DnaJ family. As to quaternary structure, homodimer. Zn(2+) is required as a cofactor.

The protein resides in the cytoplasm. Functionally, participates actively in the response to hyperosmotic and heat shock by preventing the aggregation of stress-denatured proteins and by disaggregating proteins, also in an autonomous, DnaK-independent fashion. Unfolded proteins bind initially to DnaJ; upon interaction with the DnaJ-bound protein, DnaK hydrolyzes its bound ATP, resulting in the formation of a stable complex. GrpE releases ADP from DnaK; ATP binding to DnaK triggers the release of the substrate protein, thus completing the reaction cycle. Several rounds of ATP-dependent interactions between DnaJ, DnaK and GrpE are required for fully efficient folding. Also involved, together with DnaK and GrpE, in the DNA replication of plasmids through activation of initiation proteins. In Cupriavidus taiwanensis (strain DSM 17343 / BCRC 17206 / CCUG 44338 / CIP 107171 / LMG 19424 / R1) (Ralstonia taiwanensis (strain LMG 19424)), this protein is Chaperone protein DnaJ.